We begin with the raw amino-acid sequence, 411 residues long: Putative acid phosphatase 10 (411 aa).

Residue H33 is the Nucleophile of the active site. D313 functions as the Proton donor in the catalytic mechanism. Residues C379 and C385 are joined by a disulfide bond.

Belongs to the histidine acid phosphatase family.

It catalyses the reaction a phosphate monoester + H2O = an alcohol + phosphate. This is Putative acid phosphatase 10 (pho-10) from Caenorhabditis elegans.